The primary structure comprises 84 residues: U4-theraphotoxin-Hhn1n (84 aa).

An N-terminal signal peptide occupies residues 1-22 (MKVTLIAILTCAAVLVLHTTAA). A propeptide spanning residues 23 to 47 (EELEESQLMEVGMPDTELAAVDEER) is cleaved from the precursor. Intrachain disulfides connect Cys-51–Cys-65, Cys-55–Cys-76, and Cys-70–Cys-81.

Belongs to the neurotoxin 12 (Hwtx-2) family. 02 (Hwtx-2) subfamily. As to expression, expressed by the venom gland.

It is found in the secreted. In terms of biological role, postsynaptic neurotoxin. This is U4-theraphotoxin-Hhn1n from Cyriopagopus hainanus (Chinese bird spider).